We begin with the raw amino-acid sequence, 197 residues long: Ribosomal RNA large subunit methyltransferase E (197 aa).

5 residues coordinate S-adenosyl-L-methionine: G52, W54, D72, D88, and D112. K152 functions as the Proton acceptor in the catalytic mechanism.

It belongs to the class I-like SAM-binding methyltransferase superfamily. RNA methyltransferase RlmE family.

It is found in the cytoplasm. It carries out the reaction uridine(2552) in 23S rRNA + S-adenosyl-L-methionine = 2'-O-methyluridine(2552) in 23S rRNA + S-adenosyl-L-homocysteine + H(+). Its function is as follows. Specifically methylates the uridine in position 2552 of 23S rRNA at the 2'-O position of the ribose in the fully assembled 50S ribosomal subunit. This Nitrosopumilus maritimus (strain SCM1) protein is Ribosomal RNA large subunit methyltransferase E.